The sequence spans 723 residues: Host cell factor 2 (723 aa).

Kelch repeat units follow at residues 34–79, 83–130, 207–255, and 257–305; these read LMII…GFVC, RILV…RLGH, KMYV…VIGN, and MYIF…DSQE. 3 consecutive Fibronectin type-III domains span residues 357 to 436, 516 to 606, and 608 to 720; these read PPAP…ANCT, TPSN…TCIP, and FPGA…SKKA. The interval 398 to 472 is disordered; it reads AASPDASAAP…VALHSPLAPN (75 aa). Positions 419-433 are enriched in polar residues; sequence QGSNSILHNSVSDPA.

As to quaternary structure, binds KMT2A/MLL1. Component of the MLL1/MLL complex, at least composed of KMT2A/MLL1, ASH2L, RBBP5, DPY30, WDR5, MEN1, HCFC1 and HCFC2. Interacts with TASOR.

Its subcellular location is the cytoplasm. The protein localises to the nucleus. The sequence is that of Host cell factor 2 (Hcfc2) from Rattus norvegicus (Rat).